We begin with the raw amino-acid sequence, 235 residues long: Myb family transcription factor PHL12 (235 aa).

Residues 1 to 12 are compositionally biased toward basic and acidic residues; the sequence is MMQSREEIRDDS. Residues 1–20 form a disordered region; sequence MMQSREEIRDDSSSGLVLTT. The region spanning 20–80 is the HTH myb-type domain; the sequence is TDPKPRLRWT…HLQKFRLGKQ (61 aa). Residues 51 to 76 constitute a DNA-binding region (H-T-H motif); that stretch reads PKTIMRVMGVKGLTLYHLKSHLQKFR. The interval 119–139 is coiled coil; the sequence is RNMNEMQMEVQRRIEEEVVIE.

This sequence belongs to the MYB-CC family. As to expression, expressed in phloem and/or cambium.

The protein resides in the nucleus. The protein is Myb family transcription factor PHL12 of Arabidopsis thaliana (Mouse-ear cress).